The chain runs to 42 residues: Photosystem I reaction center subunit IX (42 aa).

Residues tyrosine 7–isoleucine 27 traverse the membrane as a helical segment.

Belongs to the PsaJ family.

It localises to the plastid. Its subcellular location is the chloroplast thylakoid membrane. Functionally, may help in the organization of the PsaE and PsaF subunits. This is Photosystem I reaction center subunit IX from Chlorokybus atmophyticus (Soil alga).